Reading from the N-terminus, the 439-residue chain is GTPase Der (439 aa).

EngA-type G domains follow at residues 3–167 (PLVA…PKSS) and 176–351 (TRIA…AQYS). Residues 9–16 (GRPNVGKS), 56–60 (DTGGF), 119–122 (NKVD), 182–189 (GRPNVGKS), 229–233 (DTAGI), and 294–297 (NKWD) contribute to the GTP site. The 85-residue stretch at 352–436 (KRVSTSDLNR…PLKIIFRGRD (85 aa)) folds into the KH-like domain.

The protein belongs to the TRAFAC class TrmE-Era-EngA-EngB-Septin-like GTPase superfamily. EngA (Der) GTPase family. In terms of assembly, associates with the 50S ribosomal subunit.

Its function is as follows. GTPase that plays an essential role in the late steps of ribosome biogenesis. The polypeptide is GTPase Der (Geobacter metallireducens (strain ATCC 53774 / DSM 7210 / GS-15)).